Here is a 602-residue protein sequence, read N- to C-terminus: Elongation factor 4 (602 aa).

Positions 7–189 constitute a tr-type G domain; sequence KYIRNFSIVA…AIVSKVPAPY (183 aa). Residues 19-24 and 136-139 contribute to the GTP site; these read DHGKST and NKID.

The protein belongs to the TRAFAC class translation factor GTPase superfamily. Classic translation factor GTPase family. LepA subfamily.

The protein resides in the cell membrane. The catalysed reaction is GTP + H2O = GDP + phosphate + H(+). Functionally, required for accurate and efficient protein synthesis under certain stress conditions. May act as a fidelity factor of the translation reaction, by catalyzing a one-codon backward translocation of tRNAs on improperly translocated ribosomes. Back-translocation proceeds from a post-translocation (POST) complex to a pre-translocation (PRE) complex, thus giving elongation factor G a second chance to translocate the tRNAs correctly. Binds to ribosomes in a GTP-dependent manner. This Clostridium botulinum (strain Loch Maree / Type A3) protein is Elongation factor 4.